Here is a 163-residue protein sequence, read N- to C-terminus: Interleukin-17F (163 aa).

The first 30 residues, Met-1–Ala-30, serve as a signal peptide directing secretion. Asn-83 carries an N-linked (GlcNAc...) asparagine glycan. Cystine bridges form between Cys-102/Cys-152 and Cys-107/Cys-154.

It belongs to the IL-17 family. In terms of assembly, homodimer; disulfide-linked. Heterodimer with IL17A (IL17A-IL17F). Forms complexes with IL17RA and IL17RC receptors with 2:1 binding stoichiometry: two receptor chains for one interleukin molecule. IL17F homodimer forms predominantly complexes with IL17RC homodimer, whereas IL17A-IL17F favors complexes with IL17RA-IL17RC. IL17RA and IL17RC chains cannot distinguish between IL17A and IL17F molecules, potentially enabling the formation of topologically distinct complexes.

It localises to the secreted. Effector cytokine of innate and adaptive immune system involved in antimicrobial host defense and maintenance of tissue integrity. IL17A-IL17F signals via IL17RA-IL17RC heterodimeric receptor complex, triggering homotypic interaction of IL17RA and IL17RC chains with TRAF3IP2 adapter through SEFIR domains. This leads to downstream TRAF6-mediated activation of NF-kappa-B and MAPkinase pathways ultimately resulting in transcriptional activation of cytokines, chemokines, antimicrobial peptides and matrix metalloproteinases, with potential strong immune inflammation. IL17A-IL17F is primarily involved in host defense against extracellular bacteria and fungi by inducing neutrophilic inflammation. As signature effector cytokine of T-helper 17 cells (Th17), primarily induces neutrophil activation and recruitment at infection and inflammatory sites. Stimulates the production of antimicrobial beta-defensins DEFB1, DEFB103A, and DEFB104A by mucosal epithelial cells, limiting the entry of microbes through the epithelial barriers. IL17F homodimer can signal via IL17RC homodimeric receptor complex, triggering downstream activation of TRAF6 and NF-kappa-B signaling pathway. Via IL17RC induces transcriptional activation of IL33, a potent cytokine that stimulates group 2 innate lymphoid cells and adaptive T-helper 2 cells involved in pulmonary allergic response to fungi. Likely via IL17RC, promotes sympathetic innervation of peripheral organs by coordinating the communication between gamma-delta T cells and parenchymal cells. Stimulates sympathetic innervation of thermogenic adipose tissue by driving TGFB1 expression. Regulates the composition of intestinal microbiota and immune tolerance by inducing antimicrobial proteins that specifically control the growth of commensal Firmicutes and Bacteroidetes. The sequence is that of Interleukin-17F (IL17F) from Callithrix jacchus (White-tufted-ear marmoset).